Consider the following 203-residue polypeptide: MLLASALVLGAYLLGSVSTAILVCRLAGLPDPRSQGSGNPGATNVLRTGRKGAAIITLLGDLLKGLVPVLVAHALGLEPVWIAAVALAAFLGHLFPVYHGFRGGKGVATALGVILGIQAWVGLAALATWLIVAAISRISSLSALTAATLTPVYMYLLTGERWYVAAGVLLAALIYWRHRANIRRLLRGEEPKIGNKTKNKSEV.

The next 4 helical transmembrane spans lie at 3–23 (LASA…AILV), 75–95 (LGLE…GHLF), 113–133 (VILG…LIVA), and 156–176 (LLTG…LIYW).

The protein belongs to the PlsY family. In terms of assembly, probably interacts with PlsX.

The protein localises to the cell inner membrane. The enzyme catalyses an acyl phosphate + sn-glycerol 3-phosphate = a 1-acyl-sn-glycero-3-phosphate + phosphate. It functions in the pathway lipid metabolism; phospholipid metabolism. Its function is as follows. Catalyzes the transfer of an acyl group from acyl-phosphate (acyl-PO(4)) to glycerol-3-phosphate (G3P) to form lysophosphatidic acid (LPA). This enzyme utilizes acyl-phosphate as fatty acyl donor, but not acyl-CoA or acyl-ACP. This chain is Glycerol-3-phosphate acyltransferase, found in Thioalkalivibrio sulfidiphilus (strain HL-EbGR7).